Reading from the N-terminus, the 217-residue chain is N-(5'-phosphoribosyl)anthranilate isomerase (217 aa).

This sequence belongs to the TrpF family.

The enzyme catalyses N-(5-phospho-beta-D-ribosyl)anthranilate = 1-(2-carboxyphenylamino)-1-deoxy-D-ribulose 5-phosphate. It functions in the pathway amino-acid biosynthesis; L-tryptophan biosynthesis; L-tryptophan from chorismate: step 3/5. The sequence is that of N-(5'-phosphoribosyl)anthranilate isomerase from Chlorobium chlorochromatii (strain CaD3).